Consider the following 381-residue polypeptide: MSQLQESAVLSLAKDLISRPSVTPLDEGCQSLMAERLSQAGFEIESMVFDDTTNMWARRGTQSPVFCFAGHTDVVPVGDLNRWHTPPFEPVVIDDYLHGRGAADMKGSLAAMLVATERFVNKHPDHQGSIAFLITSDEEGPFINGTTRVIDTLEARNEKITWSLVGEPSSTHKLGDIVKNGRRGSLTGNLTVKGIQGHVAYPHLADNPIHKAAPALDELARMKWDNGNEFFPPTSFQIANINGGTGASNVIPGALEVMFNFRYSTEVTAEILIERVLNILDAHGLDYDISWVYNGLPFLTGEGPLLEATKAAIKKVTGTDTDPQTSGGTSDGRFIAPTGAQVIEVGPVNATIHKVNECVKVSDLELLTDCYEAILENLLCK.

His71 contributes to the Zn(2+) binding site. The active site involves Asp73. Asp104 contacts Zn(2+). The Proton acceptor role is filled by Glu138. Zn(2+) is bound by residues Glu139, Glu167, and His353.

The protein belongs to the peptidase M20A family. DapE subfamily. As to quaternary structure, homodimer. The cofactor is Zn(2+). Co(2+) serves as cofactor.

It catalyses the reaction N-succinyl-(2S,6S)-2,6-diaminopimelate + H2O = (2S,6S)-2,6-diaminopimelate + succinate. Its pathway is amino-acid biosynthesis; L-lysine biosynthesis via DAP pathway; LL-2,6-diaminopimelate from (S)-tetrahydrodipicolinate (succinylase route): step 3/3. Its function is as follows. Catalyzes the hydrolysis of N-succinyl-L,L-diaminopimelic acid (SDAP), forming succinate and LL-2,6-diaminopimelate (DAP), an intermediate involved in the bacterial biosynthesis of lysine and meso-diaminopimelic acid, an essential component of bacterial cell walls. The polypeptide is Succinyl-diaminopimelate desuccinylase (Shewanella pealeana (strain ATCC 700345 / ANG-SQ1)).